The primary structure comprises 589 residues: Ufm1-specific protease (589 aa).

The tract at residues 1 to 22 (MTNSQTVSLIGPTQMAPQSTPP) is disordered. Residues C421, D545, and H547 contribute to the active site.

It belongs to the peptidase C78 family. As to quaternary structure, interacts with odr-4. In terms of tissue distribution, expressed in head and tail neurons. Expressed in the amphid head neurons ADL, ASI, ASH, ASJ, ASG, ADF, ASK, AWA, AWB, AWC, and in two tail neurons, the phasmid tail neurons PHA and PHB.

The protein localises to the endoplasmic reticulum membrane. Its subcellular location is the cytoplasm. It localises to the perinuclear region. Functionally, thiol protease which recognizes and hydrolyzes the peptide bond at the C-terminal Gly of ufm-1, a ubiquitin-like modifier protein bound to a number of target proteins. Required, with oct-4, for the localization of a subset of 7 transmembrane domain odorant receptors, including odr-10, to the cilia of olfactory neurons AWA and AWC. Operates in aggregation behavior, and responses to oxygen levels. The chain is Ufm1-specific protease from Caenorhabditis elegans.